The sequence spans 360 residues: Probable ribonucleoside-diphosphate reductase small subunit 376L (360 aa).

Fe cation contacts are provided by Asp-67, Glu-98, and His-101. The active site involves Tyr-105. The Fe cation site is built by Glu-172, Glu-206, and His-209.

The protein belongs to the ribonucleoside diphosphate reductase small chain family. As to quaternary structure, heterotetramer composed of a homodimer of the large subunit (R1) and a homodimer of the small subunit (R2). Larger multisubunit protein complex are also active, composed of (R1)n(R2)n. Fe cation serves as cofactor.

It carries out the reaction a 2'-deoxyribonucleoside 5'-diphosphate + [thioredoxin]-disulfide + H2O = a ribonucleoside 5'-diphosphate + [thioredoxin]-dithiol. Functionally, ribonucleoside-diphosphate reductase holoenzyme provides the precursors necessary for viral DNA synthesis. Allows virus growth in non-dividing cells. Catalyzes the biosynthesis of deoxyribonucleotides from the corresponding ribonucleotides. This is Probable ribonucleoside-diphosphate reductase small subunit 376L from Acheta domesticus (House cricket).